We begin with the raw amino-acid sequence, 164 residues long: Anterior gradient protein 2 (164 aa).

The signal sequence occupies residues methionine 1–alanine 20. Short sequence motifs (homodimer stabilization; interchain) lie at residues serine 34–tryptophan 43 and glutamate 49–threonine 56.

The protein belongs to the AGR family. As to quaternary structure, monomer and homodimer.

It localises to the secreted. Its subcellular location is the endoplasmic reticulum. This chain is Anterior gradient protein 2, found in Xenopus tropicalis (Western clawed frog).